Here is a 394-residue protein sequence, read N- to C-terminus: Small ribosomal subunit protein uS2m (394 aa).

The transit peptide at Met1 to Phe25 directs the protein to the mitochondrion.

Belongs to the universal ribosomal protein uS2 family. As to quaternary structure, component of the mitochondrial small ribosomal subunit (mt-SSU). Mature yeast 74S mitochondrial ribosomes consist of a small (37S) and a large (54S) subunit. The 37S small subunit contains a 15S ribosomal RNA (15S mt-rRNA) and 34 different proteins. The 54S large subunit contains a 21S rRNA (21S mt-rRNA) and 46 different proteins.

The protein resides in the mitochondrion. In terms of biological role, component of the mitochondrial ribosome (mitoribosome), a dedicated translation machinery responsible for the synthesis of mitochondrial genome-encoded proteins, including at least some of the essential transmembrane subunits of the mitochondrial respiratory chain. The mitoribosomes are attached to the mitochondrial inner membrane and translation products are cotranslationally integrated into the membrane. The chain is Small ribosomal subunit protein uS2m (MRP4) from Saccharomyces cerevisiae (strain ATCC 204508 / S288c) (Baker's yeast).